The primary structure comprises 354 residues: Lysine racemase (354 aa).

Lysine 36 is subject to N6-(pyridoxal phosphate)lysine.

Belongs to the alanine racemase family. In terms of assembly, homodimer. Requires pyridoxal 5'-phosphate as cofactor.

The catalysed reaction is L-lysine = D-lysine. The enzyme catalyses L-ornithine = D-ornithine. Its pathway is cell wall biogenesis; peptidoglycan biosynthesis. Functionally, catalyzes the interconversion of D-lysine and L-lysine. Has also high activity toward ornithine, and weaker activity toward alanine. Contributes to production of D-lysine and D-alanine for use as peptidoglycan components. The sequence is that of Lysine racemase from Thermotoga maritima (strain ATCC 43589 / DSM 3109 / JCM 10099 / NBRC 100826 / MSB8).